The following is a 2339-amino-acid chain: Voltage-dependent N-type calcium channel subunit alpha-1B (2339 aa).

Over 1–90 the chain is Cytoplasmic; it reads MVRFGDELGG…DNVVRKYAKR (90 aa). A compositionally biased stretch (gly residues) spans 15-34; the sequence is AGGAERARGGGAGGAGGPGP. A disordered region spans residues 15–37; it reads AGGAERARGGGAGGAGGPGPGGL. An Omega-N-methylarginine modification is found at Arg-22. An I repeat occupies 82-359; the sequence is NVVRKYAKRI…LVLGVLSGEF (278 aa). The chain crosses the membrane as a helical span at residues 91–114; the sequence is ITEWPPFEYMILATIIANCIVLAL. Residues 115–131 lie on the Extracellular side of the membrane; the sequence is EQHLPDGDKTPMSERLD. The helical transmembrane segment at 132 to 152 threads the bilayer; that stretch reads DTEPYFIGIFCFEAGIKILAL. Over 153–163 the chain is Cytoplasmic; the sequence is GFVLHKGSYLR. Residues 164–182 traverse the membrane as a helical segment; it reads NGWNVMDFVVVLTGILATA. The Extracellular segment spans residues 183–187; the sequence is GTDFD. Residues 188-211 form a helical membrane-spanning segment; sequence LRTLRAVRVLRPLKLVSGIPSLQV. Over 212–221 the chain is Cytoplasmic; the sequence is VLKSIMKAMV. Residues 222–244 form a helical membrane-spanning segment; sequence PLLQIGLLLFFAILMFAIIGLEF. At 245–331 the chain is on the extracellular side; that stretch reads YMGKFHKACF…NTNDAAGNTW (87 aa). Residue Asn-256 is glycosylated (N-linked (GlcNAc...) asparagine). The chain crosses the membrane as a helical span at residues 332–356; it reads NWLYFIPLIIIGSFFMLNLVLGVLS. The Cytoplasmic portion of the chain corresponds to 357 to 483; the sequence is GEFAKERERV…FFIRRMVKAQ (127 aa). The interval 379 to 396 is binding to the beta subunit; sequence QQIERELNGYLEWIFKAE. Ser-411 is modified (phosphoserine). 452–459 serves as a coordination point for ATP; sequence ASLKSGKT. One copy of the II repeat lies at 469 to 713; the sequence is EKMFRFFIRR…VFLAIAVDNL (245 aa). Residues 484–502 traverse the membrane as a helical segment; the sequence is SFYWTVLCVVALNTLCVAM. At 503–512 the chain is on the extracellular side; the sequence is VHYNQPQRLT. A helical membrane pass occupies residues 513–535; the sequence is TALYFAEFVFLGLFLTEMSLKMY. Over 536–545 the chain is Cytoplasmic; that stretch reads GLGPRSYFRS. Ser-545 contributes to the a 1,2-diacyl-sn-glycero-3-phospho-(1D-myo-inositol-4,5-bisphosphate) binding site. The helical transmembrane segment at 546-567 threads the bilayer; that stretch reads SFNCFDFGVIVGSIFEVVWAAV. The Extracellular portion of the chain corresponds to 568–574; sequence KPGTSFG. Residues 575–587 traverse the membrane as a helical segment; it reads ISVLRALRLLRIF. Arg-585 and Lys-588 together coordinate a 1,2-diacyl-sn-glycero-3-phospho-(1D-myo-inositol-4,5-bisphosphate). Residues 588-605 lie on the Cytoplasmic side of the membrane; it reads KVTKYWNSLRNLVVSLLN. A helical membrane pass occupies residues 606-631; sequence SMKSIISLLFLLFLFIVVFALLGMQL. Topologically, residues 632–683 are extracellular; that stretch reads FGGQFNFKDETPTTNFDTFPAAILTVFQILTGEDWNAVMYHGIESQGGVSRG. The helical transmembrane segment at 684–710 threads the bilayer; sequence MFSSFYFIVLTLFGNYTLLNVFLAIAV. Residues 711–1156 are Cytoplasmic-facing; the sequence is DNLANAQELT…CCHYIVTMRY (446 aa). 3 positions are modified to phosphoserine: Ser-746, Ser-749, and Ser-784. Composition is skewed to basic and acidic residues over residues 809–827, 870–891, 927–937, 973–984, and 999–1026; these read DVKT…RDAP, EQDR…EERG, GSPEEAAEREP, CPREAESSEEPA, and TAEK…RNHQ. 2 disordered regions span residues 809 to 1026 and 1056 to 1084; these read DVKT…RNHQ and VEEQ…TTVH. Over residues 1066-1083 the composition is skewed to polar residues; that stretch reads QRNVTRMGSQPPDTSTTV. Ser-1074 carries the post-translational modification Phosphoserine. The III repeat unit spans residues 1142 to 1424; that stretch reads NLLRRCCHYI…IFVALIIITF (283 aa). The chain crosses the membrane as a helical span at residues 1157 to 1175; it reads FEMVILVVIALSSIALAAE. Residues 1176 to 1183 are Extracellular-facing; it reads DPVRTDSP. A helical transmembrane segment spans residues 1184 to 1208; the sequence is RNNALKYMDYIFTGVFTFEMVIKMI. Residues 1209-1222 lie on the Cytoplasmic side of the membrane; the sequence is DLGLLLHPGAYFRD. Residues 1223 to 1243 traverse the membrane as a helical segment; the sequence is LWNILDFIVVSGALVAFAFSG. The Extracellular segment spans residues 1244-1249; it reads SKGKDI. Residues 1250–1270 traverse the membrane as a helical segment; that stretch reads STIKSLRVLRVLRPLKTIKRL. Residues 1271-1288 are Cytoplasmic-facing; it reads PKLKAVFDCVVNSLKNVL. A helical membrane pass occupies residues 1289-1308; sequence NILIVYMLFMFIFAVIAVQL. At 1309 to 1395 the chain is on the extracellular side; the sequence is FKGKFFYCTD…EQGPSPGYRM (87 aa). A helical transmembrane segment spans residues 1396–1421; the sequence is ELSIFYVVYFVVFPFFFVNIFVALII. Topologically, residues 1422-1476 are cytoplasmic; that stretch reads ITFQEQGDKVMSECSLEKNERACIDFAISARPLTRYMPQNKQSFQYKTWTFVVSP. The IV repeat unit spans residues 1461 to 1714; that stretch reads NKQSFQYKTW…LFVAVIMDNF (254 aa). The helical transmembrane segment at 1477 to 1495 threads the bilayer; the sequence is PFEYFIMAMIALNTVVLMM. Topologically, residues 1496 to 1503 are extracellular; sequence KFYDAPYE. The helical transmembrane segment at 1504 to 1528 threads the bilayer; the sequence is YELMLKCLNIVFTSMFSMECVLKII. The Cytoplasmic portion of the chain corresponds to 1529-1538; sequence AFGVLNYFRD. Residues 1539–1560 traverse the membrane as a helical segment; that stretch reads AWNVFDFVTVLGSITDILVTEI. Over 1561–1566 the chain is Extracellular; that stretch reads ANNFIN. N-linked (GlcNAc...) asparagine glycosylation is present at Asn-1566. The helical transmembrane segment at 1567–1585 threads the bilayer; the sequence is LSFLRLFRAARLIKLLRQG. Residues 1586–1604 are Cytoplasmic-facing; it reads YTIRILLWTFVQSFKALPY. Residues 1605 to 1624 form a helical membrane-spanning segment; that stretch reads VCLLIAMLFFIYAIIGMQVF. Residues 1625-1686 lie on the Extracellular side of the membrane; sequence GNIALDDDTS…SNASECGSDF (62 aa). Asn-1678 is a glycosylation site (N-linked (GlcNAc...) asparagine). Residues 1687 to 1710 traverse the membrane as a helical segment; the sequence is AYFYFVSFIFLCSFLMLNLFVAVI. The Cytoplasmic portion of the chain corresponds to 1711–2339; the sequence is MDNFEYLTRD…CHHPDRDRRC (629 aa). The region spanning 1727-1762 is the EF-hand domain; that stretch reads HHLDEFIRVWAEYDPAACGRISYSDMFEMLKHMSPP. Asp-1740, Arg-1746, and Asp-1751 together coordinate Ca(2+). Residues 1983–2312 form a disordered region; that stretch reads TLSGPDAEPQ…QPPPLRRVPN (330 aa). Basic residues predominate over residues 2050 to 2064; it reads PHHHHHRCHRRRDRK. Ser-2067 is subject to Phosphoserine. Over residues 2099-2136 the composition is skewed to basic and acidic residues; the sequence is CRRERERRQERGRSQERRQPSSSSSEKHRFYSCDRFGG. Polar residues-rich tracts occupy residues 2144 to 2155 and 2165 to 2181; these read PSLSSHPTSPTA and GSGS…SGAS. Ser-2224, Ser-2233, and Ser-2256 each carry phosphoserine. Low complexity predominate over residues 2286 to 2302; sequence SNSGRSSRTSYVSSLTS.

This sequence belongs to the calcium channel alpha-1 subunit (TC 1.A.1.11) family. CACNA1B subfamily. In terms of assembly, multisubunit complex consisting of alpha-1, alpha-2, beta and delta subunits in a 1:1:1:1 ratio. The channel activity is directed by the pore-forming and voltage-sensitive alpha-1 subunit. In many cases, this subunit is sufficient to generate voltage-sensitive calcium channel activity. The auxiliary subunits beta and alpha-2/delta linked by a disulfide bridge regulate the channel activity. Interacts with RIMS1. Interacts with FMR1 (via C-terminus); this interaction induces a decrease in the number of presynaptic functional CACNA1B channels at the cell surface. In terms of processing, phosphorylated in vitro by CaM-kinase II, PKA, PKC and CGPK. Widespread expression throughout the brain. Highest levels in corpus striatum and midbrain.

The protein localises to the membrane. It catalyses the reaction Ca(2+)(in) = Ca(2+)(out). Is specifically blocked by omega-conotoxin GVIA. Is specifically blocked by omega-conotoxin MVIIA (ziconotide). Is insensitive to dihydropyridines (DHP). In terms of biological role, voltage-sensitive calcium channels (VSCC) mediate the entry of calcium ions into excitable cells and are also involved in a variety of calcium-dependent processes, including muscle contraction, hormone or neurotransmitter release, gene expression, cell motility, cell division and cell death. This alpha-1B subunit gives rise to N-type calcium currents. N-type calcium channels belong to the 'high-voltage activated' (HVA) group. They are involved in pain signaling. Calcium channels containing alpha-1B subunit may play a role in directed migration of immature neurons. Mediates Ca(2+) release probability at hippocampal neuronal soma and synaptic terminals. The chain is Voltage-dependent N-type calcium channel subunit alpha-1B (CACNA1B) from Oryctolagus cuniculus (Rabbit).